We begin with the raw amino-acid sequence, 443 residues long: Amino-acid acetyltransferase (443 aa).

An N-acetyltransferase domain is found at 296–443 (EQIRRATIND…RSKVLMADLG (148 aa)).

It belongs to the acetyltransferase family. ArgA subfamily. In terms of assembly, homohexamer.

Its subcellular location is the cytoplasm. It catalyses the reaction L-glutamate + acetyl-CoA = N-acetyl-L-glutamate + CoA + H(+). It functions in the pathway amino-acid biosynthesis; L-arginine biosynthesis; N(2)-acetyl-L-ornithine from L-glutamate: step 1/4. The sequence is that of Amino-acid acetyltransferase (argA) from Salmonella typhimurium (strain LT2 / SGSC1412 / ATCC 700720).